A 364-amino-acid chain; its full sequence is 4-hydroxy-3-methylbut-2-en-1-yl diphosphate synthase (flavodoxin) (364 aa).

4 residues coordinate [4Fe-4S] cluster: cysteine 268, cysteine 271, cysteine 303, and glutamate 310.

This sequence belongs to the IspG family. It depends on [4Fe-4S] cluster as a cofactor.

It carries out the reaction (2E)-4-hydroxy-3-methylbut-2-enyl diphosphate + oxidized [flavodoxin] + H2O + 2 H(+) = 2-C-methyl-D-erythritol 2,4-cyclic diphosphate + reduced [flavodoxin]. It participates in isoprenoid biosynthesis; isopentenyl diphosphate biosynthesis via DXP pathway; isopentenyl diphosphate from 1-deoxy-D-xylulose 5-phosphate: step 5/6. In terms of biological role, converts 2C-methyl-D-erythritol 2,4-cyclodiphosphate (ME-2,4cPP) into 1-hydroxy-2-methyl-2-(E)-butenyl 4-diphosphate. The polypeptide is 4-hydroxy-3-methylbut-2-en-1-yl diphosphate synthase (flavodoxin) (Desulfotalea psychrophila (strain LSv54 / DSM 12343)).